Reading from the N-terminus, the 423-residue chain is Dihydroorotase (423 aa).

Zn(2+)-binding residues include His-56 and His-58. Substrate is bound by residues 58–60 (HFR) and Asn-89. Zn(2+)-binding residues include Lys-137, His-168, His-227, and Asp-302. Lys-137 is modified (N6-carboxylysine). Asp-302 is a catalytic residue. His-306 lines the substrate pocket.

Belongs to the metallo-dependent hydrolases superfamily. DHOase family. Class I DHOase subfamily. Zn(2+) is required as a cofactor.

It carries out the reaction (S)-dihydroorotate + H2O = N-carbamoyl-L-aspartate + H(+). The protein operates within pyrimidine metabolism; UMP biosynthesis via de novo pathway; (S)-dihydroorotate from bicarbonate: step 3/3. Catalyzes the reversible cyclization of carbamoyl aspartate to dihydroorotate. In Methanocaldococcus jannaschii (strain ATCC 43067 / DSM 2661 / JAL-1 / JCM 10045 / NBRC 100440) (Methanococcus jannaschii), this protein is Dihydroorotase.